A 73-amino-acid polypeptide reads, in one-letter code: Large ribosomal subunit protein bL31 (73 aa).

This sequence belongs to the bacterial ribosomal protein bL31 family. Type A subfamily. As to quaternary structure, part of the 50S ribosomal subunit. Contacts protein L9.

Its function is as follows. Binds the 23S rRNA and interacts with the tRNA in the E site. This chain is Large ribosomal subunit protein bL31 (rpmE), found in Deinococcus radiodurans (strain ATCC 13939 / DSM 20539 / JCM 16871 / CCUG 27074 / LMG 4051 / NBRC 15346 / NCIMB 9279 / VKM B-1422 / R1).